The sequence spans 430 residues: Serine hydroxymethyltransferase 1 (430 aa).

(6S)-5,6,7,8-tetrahydrofolate is bound by residues leucine 132 and 136–138; that span reads GHL. At lysine 241 the chain carries N6-(pyridoxal phosphate)lysine.

The protein belongs to the SHMT family. Homodimer. Requires pyridoxal 5'-phosphate as cofactor.

It localises to the cytoplasm. The catalysed reaction is (6R)-5,10-methylene-5,6,7,8-tetrahydrofolate + glycine + H2O = (6S)-5,6,7,8-tetrahydrofolate + L-serine. Its pathway is one-carbon metabolism; tetrahydrofolate interconversion. The protein operates within amino-acid biosynthesis; glycine biosynthesis; glycine from L-serine: step 1/1. Its function is as follows. Catalyzes the reversible interconversion of serine and glycine with tetrahydrofolate (THF) serving as the one-carbon carrier. This reaction serves as the major source of one-carbon groups required for the biosynthesis of purines, thymidylate, methionine, and other important biomolecules. Also exhibits THF-independent aldolase activity toward beta-hydroxyamino acids, producing glycine and aldehydes, via a retro-aldol mechanism. This chain is Serine hydroxymethyltransferase 1, found in Bordetella parapertussis (strain 12822 / ATCC BAA-587 / NCTC 13253).